An 82-amino-acid chain; its full sequence is Putative membrane protein insertion efficiency factor (82 aa).

This sequence belongs to the UPF0161 family.

The protein localises to the cell inner membrane. In terms of biological role, could be involved in insertion of integral membrane proteins into the membrane. The protein is Putative membrane protein insertion efficiency factor of Thermus thermophilus (strain ATCC BAA-163 / DSM 7039 / HB27).